Consider the following 284-residue polypeptide: Acetylglutamate kinase (284 aa).

Residues 66–67, arginine 88, and asparagine 179 contribute to the substrate site; that span reads GG.

Belongs to the acetylglutamate kinase family. ArgB subfamily.

It localises to the cytoplasm. It catalyses the reaction N-acetyl-L-glutamate + ATP = N-acetyl-L-glutamyl 5-phosphate + ADP. Its pathway is amino-acid biosynthesis; L-arginine biosynthesis; N(2)-acetyl-L-ornithine from L-glutamate: step 2/4. Its function is as follows. Catalyzes the ATP-dependent phosphorylation of N-acetyl-L-glutamate. The sequence is that of Acetylglutamate kinase from Actinobacillus pleuropneumoniae serotype 7 (strain AP76).